Consider the following 356-residue polypeptide: Cyclin-D1-binding protein 1 (356 aa).

Ala-2 is subject to N-acetylalanine. Interaction with TCF3 regions lie at residues 2–181 (ASST…VDFV) and 147–356 (ISCN…AAEL). The segment at 2-187 (ASSTAAVPFL…VDFVKDAHEE (186 aa)) is interaction with RPLP0. Residues 2-205 (ASSTAAVPFL…DPYSGLLNDS (204 aa)) form a required for interaction with CCND1 region. The interval 198–224 (YSGLLNDSEDNSDSHSDEDGVLGLPSN) is disordered. An interaction with RPLP0 region spans residues 236 to 356 (LIIPCLALVR…KALTQRAAEL (121 aa)).

Belongs to the CCNDBP1 family. In terms of assembly, interacts with CCND1 and GRAP2. May also interact with COPS5, RPLP0, SIRT6, SYF2 and TCF3. Phosphorylated. In terms of tissue distribution, expressed at high levels in brain, intestine, muscle and ovary and at lower levels in heart, kidney, liver, lung, spleen and testis.

It localises to the cytoplasm. Its subcellular location is the nucleus. Its function is as follows. May negatively regulate cell cycle progression. May act at least in part via inhibition of the cyclin-D1/CDK4 complex, thereby preventing phosphorylation of RB1 and blocking E2F-dependent transcription. May be required for hepatocyte proliferation. The polypeptide is Cyclin-D1-binding protein 1 (Ccndbp1) (Mus musculus (Mouse)).